We begin with the raw amino-acid sequence, 420 residues long: MDRFIIHGGHRLRGDIVIGGAKNAALKLLVAGLLTSERLVLRNVPRIADITTMRRLLEQHGVTVEDLEGDGGTLAVGGTITNTEAPYDIVSQMRASILVLGPLLARCGEARVSLPGGCAIGTRPVDMHLKGLEALGAEISLENGYINARAPRGLVGERIILPFASVGATENLLMASCLARGRTEIINAAREPEIADLVACLNGMGARITGTGTGSLAIEGVEALHGTTHRVMPDRIECGTYACAAGITGGELRLIGGRADHLGAVVRALEEAGVEVFQEDDALRVRRTGALRGVDIMTEPYPGFPTDMQAQFMALLSVAEGASMVTETIFENRFMHVPELNRMGARINVHGSSAIIRGVHSLSGAPVMATDLRASFSLILAGLAAHGETILSRVYHLDRGYEAVEQKLARCGAQIERVRE.

K22–N23 is a binding site for phosphoenolpyruvate. Residue R94 coordinates UDP-N-acetyl-alpha-D-glucosamine. The active-site Proton donor is the C118. C118 carries the post-translational modification 2-(S-cysteinyl)pyruvic acid O-phosphothioketal. Positions 307 and 329 each coordinate UDP-N-acetyl-alpha-D-glucosamine.

This sequence belongs to the EPSP synthase family. MurA subfamily.

Its subcellular location is the cytoplasm. It catalyses the reaction phosphoenolpyruvate + UDP-N-acetyl-alpha-D-glucosamine = UDP-N-acetyl-3-O-(1-carboxyvinyl)-alpha-D-glucosamine + phosphate. It functions in the pathway cell wall biogenesis; peptidoglycan biosynthesis. Functionally, cell wall formation. Adds enolpyruvyl to UDP-N-acetylglucosamine. The sequence is that of UDP-N-acetylglucosamine 1-carboxyvinyltransferase from Gluconacetobacter diazotrophicus (strain ATCC 49037 / DSM 5601 / CCUG 37298 / CIP 103539 / LMG 7603 / PAl5).